The chain runs to 299 residues: 5-azacytidine resistance protein azr1 (299 aa).

In terms of domain architecture, PPM-type phosphatase spans 35-293 (KSHFPSPATL…DDTTITCLLI (259 aa)).

Functionally, confers azacytidine resistance in high copy. In Schizosaccharomyces pombe (strain 972 / ATCC 24843) (Fission yeast), this protein is 5-azacytidine resistance protein azr1 (azr1).